A 563-amino-acid chain; its full sequence is Probable terpene synthase 4 (563 aa).

Asp-316, Asp-320, and Glu-469 together coordinate Mg(2+). A DDXXD motif motif is present at residues 316–320; the sequence is DDIFD.

Belongs to the terpene synthase family. Mg(2+) is required as a cofactor.

Its function is as follows. Probable sesquiterpene synthase. The polypeptide is Probable terpene synthase 4 (TPS4) (Ricinus communis (Castor bean)).